The sequence spans 254 residues: Cold shock-induced protein TIR1 (254 aa).

The N-terminal stretch at 1–18 is a signal peptide; that stretch reads MAYTKIALFAAIAALASA. Residues 110–213 form a disordered region; the sequence is NGDASSSAAP…SSTGAKTSAI (104 aa). Low complexity predominate over residues 113–197; sequence ASSSAAPSSS…SAAPSSTEAK (85 aa). A run of 10 repeats spans residues 114-119, 120-125, 126-131, 132-137, 138-143, 144-155, 156-167, 168-179, 180-191, and 192-203. Residues 114–143 form a 5 X 6 AA approximate tandem repeats, Ala/Ser-rich region; sequence SSSAAPSSSAAPTSSAAPSSSAAPTSSAAS. The segment at 144 to 203 is 5 X 12 AA approximate tandem repeats, Ala/Ser-rich; sequence SSSEAKSSSAAPSSSEAKSSSAAPSSSEAKSSSAAPSSSEAKSSSAAPSSTEAKITSAAP. Polar residues predominate over residues 201 to 213; sequence AAPSSTGAKTSAI. A PIR1/2/3 repeat occupies 210 to 224; it reads TSAISQITDGQIQAT. N233 carries the GPI-anchor amidated asparagine lipid modification. Positions 234–254 are cleaved as a propeptide — removed in mature form; that stretch reads GAAKAFVGMGAGVVAAAAMLL.

This sequence belongs to the SRP1/TIP1 family. O-glycosylated. Post-translationally, the GPI-anchor is attached to the protein in the endoplasmic reticulum and serves to target the protein to the cell surface. There, the glucosamine-inositol phospholipid moiety is cleaved off and the GPI-modified mannoprotein is covalently attached via its lipidless GPI glycan remnant to the 1,6-beta-glucan of the outer cell wall layer. In terms of processing, covalently linked to beta-1,3-glucan of the inner cell wall layer via an alkali-sensitive ester linkage between the gamma-carboxyl group of glutamic acids, arising from a specific glutamine within the PIR1/2/3 repeat, and hydroxyl groups of glucoses of beta-1,3-glucan chains.

The protein localises to the secreted. It localises to the cell wall. The protein resides in the membrane. Functionally, component of the cell wall. Required for anaerobic growth. In Saccharomyces cerevisiae (strain ATCC 204508 / S288c) (Baker's yeast), this protein is Cold shock-induced protein TIR1 (TIR1).